A 216-amino-acid polypeptide reads, in one-letter code: Small ribosomal subunit protein uS3c (216 aa).

A KH type-2 domain is found at 43–118 (IKNYIQKNRR…KLNIAIVKVT (76 aa)).

Belongs to the universal ribosomal protein uS3 family. In terms of assembly, part of the 30S ribosomal subunit.

The protein resides in the plastid. It localises to the chloroplast. In Phaseolus angularis (Azuki bean), this protein is Small ribosomal subunit protein uS3c (rps3).